We begin with the raw amino-acid sequence, 1241 residues long: eIF-2-alpha kinase GCN2 (1241 aa).

A compositionally biased stretch (basic residues) spans 1–15 (MGRSSSKKKKKRGGS). The tract at residues 1 to 33 (MGRSSSKKKKKRGGSGRRGQLKDHGSNADEDNE) is disordered. Residues 37–148 (EEITALSAIF…EAAQEFLSEI (112 aa)) enclose the RWD domain. A disordered region spans residues 253-321 (PIAKLNTVQE…SLGSWSSDSL (69 aa)). Composition is skewed to low complexity over residues 267–276 (DTSISSFDSS) and 307–321 (NSES…SDSL). The region spanning 425-731 (FEELKPLGQG…ATELLKHAFP (307 aa)) is the Protein kinase domain. ATP-binding positions include 431–439 (LGQGGFGHV) and Lys-454. Catalysis depends on Asp-586, which acts as the Proton acceptor. The interval 819–1219 (IPMRLLSDCP…ELKKEKVVGR (401 aa)) is histidyl-tRNA synthetase-like.

Belongs to the protein kinase superfamily. Ser/Thr protein kinase family. GCN2 subfamily. As to quaternary structure, homodimer; homodimerization is important for kinase activation by uncharged tRNAs. Expressed in roots, leaves, stems, buds, flowers, siliques and seedlings.

The protein resides in the cytoplasm. The enzyme catalyses L-seryl-[protein] + ATP = O-phospho-L-seryl-[protein] + ADP + H(+). It catalyses the reaction L-threonyl-[protein] + ATP = O-phospho-L-threonyl-[protein] + ADP + H(+). Its activity is regulated as follows. The kinase activity is stimulated upon binding to uncharged tRNAs. Functionally, metabolic-stress sensing protein kinase that phosphorylates the alpha subunit of eukaryotic translation initiation factor 2 eIF-2-alpha in response to low amino acid availability. Plays a role as an activator of the general amino acid control pathway required for adapatation to amino acid starvation. Converts phosphorylated eIF-2-alpha either to a competitive inhibitor of translation initiation, leading to a global protein synthesis repression, and thus to a reduced overall utilization of amino acids, or to a translational initiation activation of specific mRNAs, and hence allowing reprogramming of amino acid biosynthetic gene expression to alleviate nutrient depletion. Binds uncharged tRNAs. The sequence is that of eIF-2-alpha kinase GCN2 from Arabidopsis thaliana (Mouse-ear cress).